We begin with the raw amino-acid sequence, 671 residues long: ABC transporter ATP-binding protein/permease wht-1 (671 aa).

Residues 1–408 (MHKAPISTLI…SWLTVIRDPN (408 aa)) are Cytoplasmic-facing. Positions 64–310 (TNFVDRFRNN…FEKCGYPCPA (247 aa)) constitute an ABC transporter domain. Residue 100–107 (GSSGAGKT) coordinates ATP. The chain crosses the membrane as a helical span at residues 409 to 429 (LLSVRLLQILITAFITGIVFF). Over 430–451 (QTPVTPATIISINGIMFNHIRN) the chain is Extracellular. A helical transmembrane segment spans residues 452–472 (MNFMLQFPNVPVITAELPIVL). The Cytoplasmic segment spans residues 473–497 (RENANGVYRTSAYFLAKNIAELPQY). The helical transmembrane segment at 498–518 (IILPILYNTIVYWMSGLYPNF) threads the bilayer. Topologically, residues 519–525 (WNYCFAS) are extracellular. A helical membrane pass occupies residues 526 to 546 (LVTILITNVAISISYAVATIF). Over 547-550 (ANTD) the chain is Cytoplasmic. Residues 551–571 (VAMTILPIFVVPIMAFGGFFI) traverse the membrane as a helical segment. Over 572–644 (TFDAIPSYFK…DFSASHKIFD (73 aa)) the chain is Extracellular. The chain crosses the membrane as a helical span at residues 645–665 (ISILFGMFIGIRIIAYVALLI). Over 666–671 (RSYNNT) the chain is Cytoplasmic.

Belongs to the ABC transporter superfamily. ABCG family. Eye pigment precursor importer (TC 3.A.1.204) subfamily. In terms of tissue distribution, expressed in the intestine in both larvae and adults. Expressed in the gut of males.

The protein localises to the membrane. Functionally, required for efficient RNA interference (RNAi). Plays a role in germline development. The polypeptide is ABC transporter ATP-binding protein/permease wht-1 (Caenorhabditis elegans).